We begin with the raw amino-acid sequence, 1026 residues long: Adenylate-forming reductase 06235 (1026 aa).

The adenylation (A) domain stretch occupies residues 37–422 (FEFHAKANPD…LGRIDNQVKI (386 aa)). Residues 332–333 (VT) and 412–415 (HLGR) each bind AMP. Residues 556–638 (SLVSTVGSTV…ALFIWILVTK (83 aa)) form a thiolation and peptide carrier (T) domain region. The tract at residues 682-901 (CIRRVCARIY…PPTKMWVKGV (220 aa)) is reductase (R) domain. NADP(+) is bound by residues 685–688 (RVCA), 769–771 (TAL), and tyrosine 840.

It belongs to the adenylate-forming reductase family.

Its function is as follows. Adenylate-forming reductase, a natural product biosynthesis enzyme that resembles non-ribosomal peptide synthetases, yet serves to modify one substrate, rather than to condense two or more building blocks. The A-domain preferentially accepts L-serine, L-alanine and L-valine as substrates. The natural product of the enzyme is not yet known. The sequence is that of Adenylate-forming reductase 06235 from Coprinopsis cinerea (strain Okayama-7 / 130 / ATCC MYA-4618 / FGSC 9003) (Inky cap fungus).